Consider the following 144-residue polypeptide: Small ribosomal subunit protein bS6 (144 aa).

A disordered region spans residues aspartate 97–alanine 144. A compositionally biased stretch (basic and acidic residues) spans lysine 105–aspartate 124.

It belongs to the bacterial ribosomal protein bS6 family.

Binds together with bS18 to 16S ribosomal RNA. The polypeptide is Small ribosomal subunit protein bS6 (Xanthomonas campestris pv. campestris (strain 8004)).